A 286-amino-acid polypeptide reads, in one-letter code: Aspartate/glutamate leucyltransferase (286 aa).

This sequence belongs to the R-transferase family. Bpt subfamily.

It localises to the cytoplasm. It catalyses the reaction N-terminal L-glutamyl-[protein] + L-leucyl-tRNA(Leu) = N-terminal L-leucyl-L-glutamyl-[protein] + tRNA(Leu) + H(+). It carries out the reaction N-terminal L-aspartyl-[protein] + L-leucyl-tRNA(Leu) = N-terminal L-leucyl-L-aspartyl-[protein] + tRNA(Leu) + H(+). In terms of biological role, functions in the N-end rule pathway of protein degradation where it conjugates Leu from its aminoacyl-tRNA to the N-termini of proteins containing an N-terminal aspartate or glutamate. This Jannaschia sp. (strain CCS1) protein is Aspartate/glutamate leucyltransferase.